The chain runs to 324 residues: Quinolinate synthase (324 aa).

The iminosuccinate site is built by histidine 39 and serine 56. [4Fe-4S] cluster is bound at residue cysteine 101. Iminosuccinate contacts are provided by residues 127–129 (YIN) and serine 144. Residue cysteine 187 participates in [4Fe-4S] cluster binding. Residues 213 to 215 (HPE) and threonine 230 each bind iminosuccinate. [4Fe-4S] cluster is bound at residue cysteine 280.

This sequence belongs to the quinolinate synthase family. Type 2 subfamily. [4Fe-4S] cluster is required as a cofactor.

It localises to the cytoplasm. It catalyses the reaction iminosuccinate + dihydroxyacetone phosphate = quinolinate + phosphate + 2 H2O + H(+). Its pathway is cofactor biosynthesis; NAD(+) biosynthesis; quinolinate from iminoaspartate: step 1/1. Its function is as follows. Catalyzes the condensation of iminoaspartate with dihydroxyacetone phosphate to form quinolinate. This Nostoc punctiforme (strain ATCC 29133 / PCC 73102) protein is Quinolinate synthase.